Reading from the N-terminus, the 250-residue chain is LexA repressor (250 aa).

Over residues 1 to 21 (MTSQERGTRRGDTRGNVRDFP) the composition is skewed to basic and acidic residues. Positions 1-33 (MTSQERGTRRGDTRGNVRDFPDSPADASGLTQR) are disordered. Residues 54–74 (VREIGEAVGLTSTSSVAHQLK) constitute a DNA-binding region (H-T-H motif). Active-site for autocatalytic cleavage activity residues include S174 and K211.

This sequence belongs to the peptidase S24 family. Homodimer.

It carries out the reaction Hydrolysis of Ala-|-Gly bond in repressor LexA.. Its function is as follows. Represses a number of genes involved in the response to DNA damage (SOS response), including recA and lexA. In the presence of single-stranded DNA, RecA interacts with LexA causing an autocatalytic cleavage which disrupts the DNA-binding part of LexA, leading to derepression of the SOS regulon and eventually DNA repair. This is LexA repressor from Parafrankia sp. (strain EAN1pec).